The chain runs to 169 residues: Der GTPase-activating protein YihI (169 aa).

Disordered regions lie at residues M1–P83 and D150–N169. Residues N21–R30 show a composition bias toward basic and acidic residues. Residues A31–G40 are compositionally biased toward basic residues. 2 stretches are compositionally biased toward basic and acidic residues: residues S51–L66 and D150–D161.

It belongs to the YihI family. In terms of assembly, interacts with Der.

A GTPase-activating protein (GAP) that modifies Der/EngA GTPase function. May play a role in ribosome biogenesis. This chain is Der GTPase-activating protein YihI, found in Photorhabdus laumondii subsp. laumondii (strain DSM 15139 / CIP 105565 / TT01) (Photorhabdus luminescens subsp. laumondii).